The primary structure comprises 143 residues: Peptide methionine sulfoxide reductase MsrB (143 aa).

The region spanning 16–139 (DAELRRRLTP…NSAALNFEAK (124 aa)) is the MsrB domain. Zn(2+) is bound by residues cysteine 55, cysteine 58, cysteine 104, and cysteine 107. Cysteine 128 functions as the Nucleophile in the catalytic mechanism.

Belongs to the MsrB Met sulfoxide reductase family. Zn(2+) is required as a cofactor.

It carries out the reaction L-methionyl-[protein] + [thioredoxin]-disulfide + H2O = L-methionyl-(R)-S-oxide-[protein] + [thioredoxin]-dithiol. The chain is Peptide methionine sulfoxide reductase MsrB from Burkholderia mallei (strain NCTC 10229).